A 520-amino-acid polypeptide reads, in one-letter code: 2-isopropylmalate synthase (520 aa).

The Pyruvate carboxyltransferase domain occupies 12-274 (IRIFDTTLRD…DSAINTPRIV (263 aa)). Positions 21, 209, 211, and 245 each coordinate Mn(2+). The tract at residues 396–520 (RLASMTISDV…VIAGKTAAVA (125 aa)) is regulatory domain.

It belongs to the alpha-IPM synthase/homocitrate synthase family. LeuA type 1 subfamily. As to quaternary structure, homodimer. It depends on Mn(2+) as a cofactor.

It is found in the cytoplasm. It catalyses the reaction 3-methyl-2-oxobutanoate + acetyl-CoA + H2O = (2S)-2-isopropylmalate + CoA + H(+). The protein operates within amino-acid biosynthesis; L-leucine biosynthesis; L-leucine from 3-methyl-2-oxobutanoate: step 1/4. In terms of biological role, catalyzes the condensation of the acetyl group of acetyl-CoA with 3-methyl-2-oxobutanoate (2-ketoisovalerate) to form 3-carboxy-3-hydroxy-4-methylpentanoate (2-isopropylmalate). The polypeptide is 2-isopropylmalate synthase (Xanthomonas oryzae pv. oryzae (strain KACC10331 / KXO85)).